A 571-amino-acid chain; its full sequence is Urease subunit alpha (571 aa).

Residues 133–571 (AGIDTHIHFI…VALNQRYFFS (439 aa)) enclose the Urease domain. Residues His138, His140, and Lys221 each coordinate Ni(2+). Lys221 carries the post-translational modification N6-carboxylysine. Position 223 (His223) interacts with substrate. Ni(2+) contacts are provided by His250 and His276. The active-site Proton donor is the His324. Asp364 is a Ni(2+) binding site.

Belongs to the metallo-dependent hydrolases superfamily. Urease alpha subunit family. Heterotrimer of UreA (gamma), UreB (beta) and UreC (alpha) subunits. Three heterotrimers associate to form the active enzyme. Ni cation serves as cofactor. Carboxylation allows a single lysine to coordinate two nickel ions.

It is found in the cytoplasm. The catalysed reaction is urea + 2 H2O + H(+) = hydrogencarbonate + 2 NH4(+). The protein operates within nitrogen metabolism; urea degradation; CO(2) and NH(3) from urea (urease route): step 1/1. The sequence is that of Urease subunit alpha from Photorhabdus laumondii subsp. laumondii (strain DSM 15139 / CIP 105565 / TT01) (Photorhabdus luminescens subsp. laumondii).